Reading from the N-terminus, the 246-residue chain is Ribonuclease 3 (246 aa).

Residues 8–137 (ANRLKTRLGF…LLGAIYLDQG (130 aa)) form the RNase III domain. Residue Glu50 coordinates Mg(2+). Residue Asp54 is part of the active site. Mg(2+) is bound by residues Asp123 and Glu126. Glu126 is an active-site residue. Positions 164–233 (DYKTELQEIL…AKDAFQHLEG (70 aa)) constitute a DRBM domain. Residues 212 to 246 (SGHSKKEAEQQAAKDAFQHLEGMGKSGHKSAGPIR) form a disordered region.

This sequence belongs to the ribonuclease III family. In terms of assembly, homodimer. Requires Mg(2+) as cofactor.

Its subcellular location is the cytoplasm. The enzyme catalyses Endonucleolytic cleavage to 5'-phosphomonoester.. In terms of biological role, digests double-stranded RNA. Involved in the processing of primary rRNA transcript to yield the immediate precursors to the large and small rRNAs (23S and 16S). Processes some mRNAs, and tRNAs when they are encoded in the rRNA operon. Processes pre-crRNA and tracrRNA of type II CRISPR loci if present in the organism. This chain is Ribonuclease 3, found in Desulforamulus reducens (strain ATCC BAA-1160 / DSM 100696 / MI-1) (Desulfotomaculum reducens).